Here is a 235-residue protein sequence, read N- to C-terminus: Thiamine import ATP-binding protein ThiQ (235 aa).

Residues 2-230 form the ABC transporter domain; it reads LKLENLTYRY…TVPEAAILGM (229 aa). 32–39 lines the ATP pocket; that stretch reads GPSGAGKS.

It belongs to the ABC transporter superfamily. Thiamine importer (TC 3.A.1.19.1) family. The complex is composed of two ATP-binding proteins (ThiQ), two transmembrane proteins (ThiP) and a solute-binding protein (ThiB).

It is found in the cell inner membrane. It catalyses the reaction thiamine(out) + ATP + H2O = thiamine(in) + ADP + phosphate + H(+). Functionally, part of the ABC transporter complex ThiBPQ involved in thiamine import. Responsible for energy coupling to the transport system. In Photorhabdus laumondii subsp. laumondii (strain DSM 15139 / CIP 105565 / TT01) (Photorhabdus luminescens subsp. laumondii), this protein is Thiamine import ATP-binding protein ThiQ.